The sequence spans 238 residues: MGKKLLQQRAGRGGINFRSPSWRRVGKAKIPNIEGEHIGKVIDIVHNPGTNAPLALIKLDDGTKFYVPSVQGLVVGQKIQIGKNAAISNGNIVEVGNVPEGTIISNIEKTRGDGGKFARSAGTYGVVVGKTGDKVLVKLSSEKIAQVSSNARAIVGVVAGGGVTEKPLLKAGNNYWKYKVKAKKWPHVRGVAMNAVSHPHGGGLHQSVSRPSTVSRNAPPGRKVGHIAARRTGRKEGA.

A disordered region spans residues 199–238 (PHGGGLHQSVSRPSTVSRNAPPGRKVGHIAARRTGRKEGA). Over residues 206-216 (QSVSRPSTVSR) the composition is skewed to polar residues. Basic residues predominate over residues 223-238 (KVGHIAARRTGRKEGA).

This sequence belongs to the universal ribosomal protein uL2 family. Part of the 50S ribosomal subunit. Forms a bridge to the 30S subunit in the 70S ribosome.

Its function is as follows. One of the primary rRNA binding proteins. Required for association of the 30S and 50S subunits to form the 70S ribosome, for tRNA binding and peptide bond formation. It has been suggested to have peptidyltransferase activity; this is somewhat controversial. Makes several contacts with the 16S rRNA in the 70S ribosome. The protein is Large ribosomal subunit protein uL2 of Sulfurisphaera tokodaii (strain DSM 16993 / JCM 10545 / NBRC 100140 / 7) (Sulfolobus tokodaii).